Reading from the N-terminus, the 198-residue chain is Peroxiredoxin-2 (198 aa).

Ala2 is modified (N-acetylalanine). The 159-residue stretch at 6-164 folds into the Thioredoxin domain; that stretch reads AHIGKPAPDF…ALRLVQAFQY (159 aa). The active-site Cysteine sulfenic acid (-SOH) intermediate is the Cys51. At Ser112 the chain carries Phosphoserine. Thr182 is subject to Phosphothreonine. At Lys196 the chain carries N6-acetyllysine.

The protein belongs to the peroxiredoxin family. AhpC/Prx1 subfamily. As to quaternary structure, homodimer; disulfide-linked, upon oxidation. 5 homodimers assemble to form a ring-like decamer. Interacts with TIPIN. In terms of processing, the enzyme can be inactivated by further oxidation of the cysteine sulfenic acid (C(P)-SOH) to sulphinic acid (C(P)-SO2H) instead of its condensation to a disulfide bond. It can be reactivated by forming a transient disulfide bond with sulfiredoxin SRXN1, which reduces the cysteine sulfinic acid in an ATP- and Mg-dependent manner. Post-translationally, acetylation increases resistance to transition to high molecular-mass complexes. Deacetylated by HDAC6 which decreases reducing activity.

It is found in the cytoplasm. It carries out the reaction a hydroperoxide + [thioredoxin]-dithiol = an alcohol + [thioredoxin]-disulfide + H2O. In terms of biological role, thiol-specific peroxidase that catalyzes the reduction of hydrogen peroxide and organic hydroperoxides to water and alcohols, respectively. Plays a role in cell protection against oxidative stress by detoxifying peroxides and as sensor of hydrogen peroxide-mediated signaling events. Might participate in the signaling cascades of growth factors and tumor necrosis factor-alpha by regulating the intracellular concentrations of H(2)O(2). This chain is Peroxiredoxin-2 (PRDX2), found in Cricetulus griseus (Chinese hamster).